We begin with the raw amino-acid sequence, 230 residues long: Sugar fermentation stimulation protein homolog (230 aa).

It belongs to the SfsA family.

This is Sugar fermentation stimulation protein homolog from Clostridium botulinum (strain Loch Maree / Type A3).